We begin with the raw amino-acid sequence, 394 residues long: Phosphoglycerate kinase (394 aa).

Substrate is bound by residues 21 to 23 (DFN), Arg36, 59 to 62 (HLGR), Arg118, and Arg151. At Ser183 the chain carries Phosphoserine. Residues Lys201 and Gly292 each contribute to the ATP site. Thr299 carries the phosphothreonine modification. ATP is bound by residues Glu323 and 350-353 (GGDS).

It belongs to the phosphoglycerate kinase family. In terms of assembly, monomer.

It is found in the cytoplasm. The enzyme catalyses (2R)-3-phosphoglycerate + ATP = (2R)-3-phospho-glyceroyl phosphate + ADP. The protein operates within carbohydrate degradation; glycolysis; pyruvate from D-glyceraldehyde 3-phosphate: step 2/5. The chain is Phosphoglycerate kinase from Bacillus cereus (strain G9842).